Consider the following 324-residue polypeptide: MNILTDFRTHRPATLADAVNALAAEATLPLGAGTDLLPNLRRGLGHPAALVDLTGIDGLATISTLADGSLRIGAGATLEAIAEHDAIRTTWPALAQAAESVAGPTHRAAATLGGNLCQDTRCTFYNQSEWWRSGNGYCLKYKGDKCHVIVKSDRCYATYHGDVAPALMVLDARAEIVGPAGKRTVPVAQLFRESGAEHLTLEKGELLAAIEVPPTGAWSAAYSKVRIRDAVDFPLAGVAAALQRDGDRIAGLRVAITGSNSAPLMVPVDALLGGNWDDAAAETLAQLVRKTSNVLRTTITGVKYRRRVLLAISRKVVDQLWEAR.

Residues 2–217 (NILTDFRTHR…AAIEVPPTGA (216 aa)) form the FAD-binding PCMH-type domain. Residues 29–36 (PLGAGTDL), threonine 111, asparagine 115, and glutamine 118 each bind FAD. Positions 122, 138, 146, and 155 each coordinate [4Fe-4S] cluster. FAD contacts are provided by aspartate 162 and lysine 224.

Heterohexamer of two alpha, two beta and two gamma subunits. The cofactor is FAD. [4Fe-4S] cluster is required as a cofactor.

The enzyme catalyses oxidized 2[4Fe-4S]-[ferredoxin] + benzoyl-CoA + H2O = 4-hydroxybenzoyl-CoA + reduced 2[4Fe-4S]-[ferredoxin] + 2 H(+). With respect to regulation, inactivated by low concentrations of cyanide in vitro. Component of a complex that catalyzes the reductive dehydroxylation of 4-hydroxybenzoyl-CoA to benzoyl-CoA. Reaction is not reversible. Is a key enzyme in the anaerobic degradation of phenolic compounds. The chain is 4-hydroxybenzoyl-CoA reductase subunit beta (hcrB) from Thauera aromatica.